Reading from the N-terminus, the 105-residue chain is Venom metalloprotease inhibitor (105 aa).

Residues 1 to 21 (MFRFVCVLFIALVVFCTTTSA) form the signal peptide. 5 disulfides stabilise this stretch: Cys-26–Cys-61, Cys-35–Cys-57, Cys-39–Cys-50, Cys-43–Cys-83, and Cys-63–Cys-77. Positions 26-83 (CNRPNEEYRCGSACQTTCATLGQRCPIMNIRCNDACYCKEGYARYGDDTGMCVSISQC) constitute a TIL domain.

The protein belongs to the serine protease inhibitor-like (TIL domain-containing) family. Expressed by the venom gland.

It is found in the secreted. Inhibits metalloprotease (human MMP3), trypsin, chymotrypsin, plasmin and microbial serine protease (proteinase K). Exhibits antifibrinolytic activity by binding plasmin and inhibiting it. Does not inhibit elastase, thrombin or microbial serine protease (subtilisin A). This is Venom metalloprotease inhibitor from Bombus ignitus (Bumblebee).